The sequence spans 600 residues: QTTEILLCLSPVEVASLKEGINFFRNKSTGKDYILYKNKSRLRACKNMCKHQGGLFIKDIEDLAGRSVRCTKHNWKLDVSTMKYINPPESFCQDELVVEMDENNRLLLLELNPPNPWDLQPRSPEELAFGEVQITYLTHACMDLKLGDKRMVFDPWLIGPAFARGWWLLHEPPSDWLERLCQADLIYISHLHSDHLSYPTLKKLAGRRPDIPIYVGNTERPVFWNLNQSGVQLTNINVVPFGIWQQVDKNLRFMILMDGVHPEMDTCIIVEYKGHKILNTVDCTRPNGGRLPMKVALMMSDFAGGASGFPMTFSGGKFTEEWKAQFIKTERKKLLNYKARLVKNLQPRIYCPFAGYFVESHPSDKYIKETNTKNDPNELNNLIKKNSDVITWTPRPGATLDLGRMLKDPTDSKGIIEPPEGTKIYKDSWDFEPYLEILNAAVGDEIFLHSSWIKEYFTWAGFKDYNLVVRMIETDEDFNPFPGGYDYLVDFLDLSFPKERPQREHPYEEIHSRVDVIRHVVKNGLLWDELYIGFQTRLQRDPDIYHHLFWNHFQIKLPLTPPNWKSFLMCCEQNGPGILQFSTERTNEPNRNKFSVENKA.

Residues 9–107 (LSPVEVASLK…VEMDENNRLL (99 aa)) form the Rieske domain. 4 residues coordinate [2Fe-2S] cluster: Cys-49, His-51, Cys-70, and His-73.

Belongs to the CMP-Neu5Ac hydroxylase family. Requires [2Fe-2S] cluster as cofactor.

The protein localises to the cytoplasm. It carries out the reaction CMP-N-acetyl-beta-neuraminate + 2 Fe(II)-[cytochrome b5] + O2 + 2 H(+) = CMP-N-glycoloyl-beta-neuraminate + 2 Fe(III)-[cytochrome b5] + H2O. It participates in amino-sugar metabolism; N-acetylneuraminate metabolism. Sialic acids are components of carbohydrate chains of glycoconjugates and are involved in cell-cell recognition and cell-pathogen interactions. Catalyzes the conversion of CMP-N-acetylneuraminic acid (CMP-Neu5Ac) into its hydroxylated derivative CMP-N-glycolylneuraminic acid (CMP-Neu5Gc), a sialic acid abundantly expressed at the surface of many cells. This Pan paniscus (Pygmy chimpanzee) protein is Cytidine monophosphate-N-acetylneuraminic acid hydroxylase (CMAH).